The sequence spans 375 residues: Odorant receptor 10 (375 aa).

6 helical membrane-spanning segments follow: residues Ile-32–Trp-52, Val-58–Leu-78, Asn-125–Val-145, Ile-167–Thr-187, Tyr-250–Leu-270, and Ile-279–His-299.

This sequence belongs to the insect chemoreceptor superfamily. Heteromeric odorant receptor channel (TC 1.A.69) family. Expressed in female antenna, maxillary palp and proboscis. Expressed in female body. Expressed in male tissues.

Its subcellular location is the cell membrane. Functionally, odorant receptor which complexes with Orco, a coreceptor, to form odorant-sensing units, providing sensitive and prolonged odorant signaling and calcium permeability. Can sense indole, 1-octen-3-ol, 3-methyindole and an insect repellent DEET. The polypeptide is Odorant receptor 10 (Aedes albopictus (Asian tiger mosquito)).